Consider the following 285-residue polypeptide: 4-diphosphocytidyl-2-C-methyl-D-erythritol kinase (285 aa).

Lys11 is an active-site residue. Position 93–103 (93–103) interacts with ATP; that stretch reads PLAAGLAGGSA. The active site involves Asp135.

This sequence belongs to the GHMP kinase family. IspE subfamily.

It catalyses the reaction 4-CDP-2-C-methyl-D-erythritol + ATP = 4-CDP-2-C-methyl-D-erythritol 2-phosphate + ADP + H(+). It functions in the pathway isoprenoid biosynthesis; isopentenyl diphosphate biosynthesis via DXP pathway; isopentenyl diphosphate from 1-deoxy-D-xylulose 5-phosphate: step 3/6. Catalyzes the phosphorylation of the position 2 hydroxy group of 4-diphosphocytidyl-2C-methyl-D-erythritol. This is 4-diphosphocytidyl-2-C-methyl-D-erythritol kinase from Moorella thermoacetica (strain ATCC 39073 / JCM 9320).